A 736-amino-acid polypeptide reads, in one-letter code: Cytosolic neutral trehalase (736 aa).

Residues 1-47 (MSEAPQARRVGSVDDHSVYDDAKTYYTSEERHNNSRSGPRQRTYSQN) form a disordered region. Basic and acidic residues predominate over residues 11–33 (GSVDDHSVYDDAKTYYTSEERHN). Residues 35–47 (SRSGPRQRTYSQN) show a composition bias toward polar residues. 5 residues coordinate Ca(2+): D92, D94, N96, Q98, and D103. Residues R279, 286–287 (WD), N323, 332–334 (RSQ), E399, R448, and G451 each bind substrate. Catalysis depends on proton donor/acceptor residues D453 and E657.

Belongs to the glycosyl hydrolase 37 family. Ca(2+) serves as cofactor.

The protein localises to the cytoplasm. It catalyses the reaction alpha,alpha-trehalose + H2O = alpha-D-glucose + beta-D-glucose. It functions in the pathway carbohydrate degradation. Functionally, hydrolyzes intracellular trehalose to glucose. Plays a role in pathogenicity, specifically in proliferation of invasive hyphae in rice blast disease. This is Cytosolic neutral trehalase (NTH1) from Pyricularia oryzae (strain 70-15 / ATCC MYA-4617 / FGSC 8958) (Rice blast fungus).